The following is a 427-amino-acid chain: Serine--tRNA ligase (427 aa).

Thr230–Glu232 provides a ligand contact to L-serine. Arg261 to Glu263 contacts ATP. An L-serine-binding site is contributed by Glu284. Residue Glu348–Ser351 participates in ATP binding. Residue Ser384 participates in L-serine binding.

Belongs to the class-II aminoacyl-tRNA synthetase family. Type-1 seryl-tRNA synthetase subfamily. Homodimer. The tRNA molecule binds across the dimer.

It is found in the cytoplasm. The enzyme catalyses tRNA(Ser) + L-serine + ATP = L-seryl-tRNA(Ser) + AMP + diphosphate + H(+). It carries out the reaction tRNA(Sec) + L-serine + ATP = L-seryl-tRNA(Sec) + AMP + diphosphate + H(+). It participates in aminoacyl-tRNA biosynthesis; selenocysteinyl-tRNA(Sec) biosynthesis; L-seryl-tRNA(Sec) from L-serine and tRNA(Sec): step 1/1. Functionally, catalyzes the attachment of serine to tRNA(Ser). Is also able to aminoacylate tRNA(Sec) with serine, to form the misacylated tRNA L-seryl-tRNA(Sec), which will be further converted into selenocysteinyl-tRNA(Sec). The sequence is that of Serine--tRNA ligase from Desulforapulum autotrophicum (strain ATCC 43914 / DSM 3382 / VKM B-1955 / HRM2) (Desulfobacterium autotrophicum).